The following is a 194-amino-acid chain: PPE family protein PPE41 (194 aa).

This sequence belongs to the mycobacterial PPE family. As to quaternary structure, forms a heterodimer with PE25. The dimer forms a 1:1:1 heterotrimeric complex with EspG5. PPE41 interacts directly with EspG5.

The protein resides in the secreted. Its subcellular location is the cell surface. The PE25/PPE41 dimer induces both a strong humoral and cellular immune response. The dimer induces necrosis, but not apoptosis, in mouse macrophage cells. It also induces activation and maturation of mouse dendritic cells and drives Th2-biased immune responses. This is PPE family protein PPE41 from Mycobacterium tuberculosis (strain ATCC 25618 / H37Rv).